Reading from the N-terminus, the 1040-residue chain is BEM1-interacting protein 2 (1040 aa).

The interval 1 to 39 is disordered; it reads MSNDREVPTLSQLNTTVSRDKDVSDTLSPDFDSKGSATG. Polar residues predominate over residues 8–17; sequence PTLSQLNTTV. Residues S18, S24, and S28 each carry the phosphoserine modification. An SH3 domain is found at 43–107; sequence GNFPMYIAIN…PVVFTQKITV (65 aa). The SAM domain occupies 266-330; the sequence is WSPEEITAYF…FKEIEKIKEA (65 aa). 3 disordered regions span residues 365–412, 437–478, and 491–744; these read YRGH…SQEA, VSPR…WQSP, and IDQY…ARPV. The span at 372 to 397 shows a compositional bias: polar residues; it reads TSQSLEDLPSQQNFIPTPRNTRNSSA. The segment covering 444-457 has biased composition (pro residues); that stretch reads KPPSYPSPAQPPKS. S450 bears the Phosphoserine mark. Positions 459-478 are enriched in polar residues; sequence LLNNTRTSPSPAQLYSWQSP. The span at 495–505 shows a compositional bias: low complexity; the sequence is SSSDSNFNSRS. Phosphoserine occurs at positions 519, 523, and 546. Basic and acidic residues predominate over residues 557 to 570; that stretch reads SSDRKSSCSSHEEE. The span at 573–598 shows a compositional bias: polar residues; the sequence is QETMNTFERPTSSIYADGSTIASISN. Basic and acidic residues predominate over residues 600 to 609; that stretch reads KLAHEKEGKK. The span at 632–648 shows a compositional bias: low complexity; the sequence is LKRSSSASRTSSFKKSS. Position 652 is a phosphoserine (S652). The span at 654–684 shows a compositional bias: polar residues; sequence FRQQFTDNAARSSSPEENPITSMPSEKNSSP. A compositionally biased stretch (basic residues) spans 690 to 701; it reads SSKKSRSKRRSV. Residues 702 to 732 show a composition bias toward basic and acidic residues; it reads SAKEAEIFTETVKDDKNKRSASEAIKGETLK. Positions 768–887 constitute a PH domain; the sequence is DADFSGWMSK…WMAALIKTTI (120 aa). Residues 943-957 show a composition bias toward low complexity; sequence QLQQQQHDNNQGQAD. 2 disordered regions span residues 943-986 and 1007-1040; these read QLQQ…NNTT and VARN…TDKI. The span at 973–986 shows a compositional bias: polar residues; the sequence is TISTPNLSSANNTT. Basic and acidic residues predominate over residues 1015–1024; the sequence is GTEKKGKFST.

As to quaternary structure, interacts with BEM1. Interacts with TOS7.

It localises to the bud. The protein localises to the bud neck. In terms of biological role, protein involved in bud formation. Functions redundantly with BOI1 to promote the fusion of secretory vesicles with the plasma membrane at sites of polarized growth. Acts as an abscission inhibitor during cytokinesis in response to chromatin bridges. The chain is BEM1-interacting protein 2 from Saccharomyces cerevisiae (strain ATCC 204508 / S288c) (Baker's yeast).